The sequence spans 450 residues: UDP-N-acetylmuramoylalanine--D-glutamate ligase (450 aa).

119–125 (GSNGKTT) lines the ATP pocket.

The protein belongs to the MurCDEF family.

It localises to the cytoplasm. It carries out the reaction UDP-N-acetyl-alpha-D-muramoyl-L-alanine + D-glutamate + ATP = UDP-N-acetyl-alpha-D-muramoyl-L-alanyl-D-glutamate + ADP + phosphate + H(+). Its pathway is cell wall biogenesis; peptidoglycan biosynthesis. Cell wall formation. Catalyzes the addition of glutamate to the nucleotide precursor UDP-N-acetylmuramoyl-L-alanine (UMA). In Streptococcus pneumoniae (strain ATCC BAA-255 / R6), this protein is UDP-N-acetylmuramoylalanine--D-glutamate ligase.